We begin with the raw amino-acid sequence, 212 residues long: Outer-membrane lipoprotein LolB (212 aa).

The signal sequence occupies residues 1–16; the sequence is MACRSWVLGILLVLVG. Residue C17 is the site of N-palmitoyl cysteine attachment. The S-diacylglycerol cysteine moiety is linked to residue C17.

The protein belongs to the LolB family. Monomer.

The protein resides in the cell outer membrane. Functionally, plays a critical role in the incorporation of lipoproteins in the outer membrane after they are released by the LolA protein. The protein is Outer-membrane lipoprotein LolB of Nitrosomonas europaea (strain ATCC 19718 / CIP 103999 / KCTC 2705 / NBRC 14298).